The primary structure comprises 334 residues: L-lactate dehydrogenase B chain (334 aa).

Ala-2 is subject to N-acetylalanine. N6-acetyllysine is present on Lys-7. Residues 30-58 and Arg-100 each bind NAD(+); that span reads GQVGMACAISILGKSLTDELALVDVLEDK. At Ser-44 the chain carries Phosphoserine. Lys-58 is modified (N6-acetyllysine). Arg-107 serves as a coordination point for substrate. At Lys-119 the chain carries N6-acetyllysine. Asn-139 is an NAD(+) binding site. Residues Asn-139 and Arg-170 each coordinate substrate. The active-site Proton acceptor is His-194. The residue at position 240 (Tyr-240) is a Phosphotyrosine. Thr-249 contacts substrate. N6-acetyllysine is present on Lys-329.

This sequence belongs to the LDH/MDH superfamily. LDH family. In terms of assembly, homotetramer. Interacts with PTEN upstream reading frame protein MP31; the interaction leads to inhibition of mitochondrial lactate dehydrogenase activity, preventing conversion of lactate to pyruvate in mitochondria.

It is found in the cytoplasm. Its subcellular location is the mitochondrion inner membrane. The catalysed reaction is (S)-lactate + NAD(+) = pyruvate + NADH + H(+). The protein operates within fermentation; pyruvate fermentation to lactate; (S)-lactate from pyruvate: step 1/1. Interconverts simultaneously and stereospecifically pyruvate and lactate with concomitant interconversion of NADH and NAD(+). The protein is L-lactate dehydrogenase B chain (LDHB) of Sus scrofa (Pig).